The chain runs to 59 residues: Ribosome biogenesis protein Nop10 (59 aa).

This sequence belongs to the NOP10 family.

Involved in ribosome biogenesis; more specifically in 18S rRNA pseudouridylation and in cleavage of pre-rRNA. The chain is Ribosome biogenesis protein Nop10 from Thermococcus sibiricus (strain DSM 12597 / MM 739).